The following is a 389-amino-acid chain: UDP-GlcNAc:betaGal beta-1,3-N-acetylglucosaminyltransferase 8 (389 aa).

Over 1 to 7 (MRCRKCQ) the chain is Cytoplasmic. A helical; Signal-anchor for type II membrane protein transmembrane segment spans residues 8-24 (LCLSALLTLLGLKVYIE). The Lumenal portion of the chain corresponds to 25 to 389 (WTSESWLKKA…RHLWVPELQC (365 aa)). The tract at residues 36-57 (PRGALPSPTPPNAEPTLPTNLS) is disordered. N-linked (GlcNAc...) asparagine glycans are attached at residues Asn55 and Asn212.

This sequence belongs to the glycosyltransferase 31 family. As to quaternary structure, interacts with B3GNT2; this interaction greatly increases B3GNT2 catalytic activity, independently of B3GNT8 enzymatic activity.

Its subcellular location is the golgi apparatus membrane. The protein operates within protein modification; protein glycosylation. Beta-1,3-N-acetylglucosaminyltransferase that plays a role in the elongation of specific branch structures of multiantennary N-glycans. Has strong activity towards tetraantennary N-glycans and 2,6 triantennary glycans. The chain is UDP-GlcNAc:betaGal beta-1,3-N-acetylglucosaminyltransferase 8 from Mus musculus (Mouse).